The primary structure comprises 106 residues: Nucleoid-associated protein Fjoh_2555 (106 aa).

It belongs to the YbaB/EbfC family. As to quaternary structure, homodimer.

The protein localises to the cytoplasm. Its subcellular location is the nucleoid. Its function is as follows. Binds to DNA and alters its conformation. May be involved in regulation of gene expression, nucleoid organization and DNA protection. The protein is Nucleoid-associated protein Fjoh_2555 of Flavobacterium johnsoniae (strain ATCC 17061 / DSM 2064 / JCM 8514 / BCRC 14874 / CCUG 350202 / NBRC 14942 / NCIMB 11054 / UW101) (Cytophaga johnsonae).